The chain runs to 186 residues: Large ribosomal subunit protein uL10 (186 aa).

The protein belongs to the universal ribosomal protein uL10 family. Part of the ribosomal stalk of the 50S ribosomal subunit. The N-terminus interacts with L11 and the large rRNA to form the base of the stalk. The C-terminus forms an elongated spine to which L12 dimers bind in a sequential fashion forming a multimeric L10(L12)X complex.

Its function is as follows. Forms part of the ribosomal stalk, playing a central role in the interaction of the ribosome with GTP-bound translation factors. This chain is Large ribosomal subunit protein uL10, found in Nitrosococcus oceani (strain ATCC 19707 / BCRC 17464 / JCM 30415 / NCIMB 11848 / C-107).